We begin with the raw amino-acid sequence, 258 residues long: Snake venom serine protease 3 (258 aa).

The first 18 residues, M1–A18, serve as a signal peptide directing secretion. The propeptide occupies Q19–L24. In terms of domain architecture, Peptidase S1 spans V25–A249. Intrachain disulfides connect C31–C163, C50–C66, C98–C256, C142–C210, C174–C189, and C200–C225. A glycan (N-linked (GlcNAc...) asparagine) is linked at N44. The active-site Charge relay system is the H65. A glycan (N-linked (GlcNAc...) asparagine) is linked at N103. D110 (charge relay system) is an active-site residue. Residues N117, N121, and N154 are each glycosylated (N-linked (GlcNAc...) asparagine). The Charge relay system role is filled by S204. N251 is a glycosylation site (N-linked (GlcNAc...) asparagine).

It belongs to the peptidase S1 family. Snake venom subfamily. As to quaternary structure, monomer. In terms of tissue distribution, expressed by the venom gland.

The protein localises to the secreted. Functionally, snake venom serine protease that may act in the hemostasis system of the prey. This is Snake venom serine protease 3 (TLG3) from Craspedocephalus gramineus (Bamboo pit viper).